A 59-amino-acid polypeptide reads, in one-letter code: Large ribosomal subunit protein bL32 (59 aa).

Residues 1–15 are compositionally biased toward basic residues; it reads MANPKRKQSKRRSAN. Residues 1 to 48 are disordered; sequence MANPKRKQSKRRSANRRAANAFIAPEFAKDPTDGSAFRPHRVNPKNGM.

This sequence belongs to the bacterial ribosomal protein bL32 family.

The protein is Large ribosomal subunit protein bL32 of Opitutus terrae (strain DSM 11246 / JCM 15787 / PB90-1).